We begin with the raw amino-acid sequence, 428 residues long: uncharacterized protein (428 aa).

Disordered regions lie at residues 1 to 25, 157 to 219, and 247 to 271; these read MRDN…PTRT, DTAK…TEQV, and DFGT…PWRP. Residues 12-22 show a composition bias toward polar residues; sequence GSESQQTTYDP. The segment covering 157–171 has biased composition (basic and acidic residues); it reads DTAKSNEKLQGDESK. Positions 172-186 are enriched in low complexity; that stretch reads SSNGSSSTSTTTQRG. Residues 206–217 are compositionally biased toward polar residues; sequence GSQGNSGEQGTE.

Belongs to the adhesin P1 family.

This is an uncharacterized protein from Mycoplasma pneumoniae (strain ATCC 29342 / M129 / Subtype 1) (Mycoplasmoides pneumoniae).